The following is a 205-amino-acid chain: Thiamine-phosphate synthase (205 aa).

Residues 37–41 and N69 contribute to the 4-amino-2-methyl-5-(diphosphooxymethyl)pyrimidine site; that span reads QVREK. Residues D70 and D89 each coordinate Mg(2+). S108 is a binding site for 4-amino-2-methyl-5-(diphosphooxymethyl)pyrimidine. Position 134-136 (134-136) interacts with 2-[(2R,5Z)-2-carboxy-4-methylthiazol-5(2H)-ylidene]ethyl phosphate; sequence TGS. Residue K137 coordinates 4-amino-2-methyl-5-(diphosphooxymethyl)pyrimidine. Residues G165 and 185–186 each bind 2-[(2R,5Z)-2-carboxy-4-methylthiazol-5(2H)-ylidene]ethyl phosphate; that span reads IS.

This sequence belongs to the thiamine-phosphate synthase family. The cofactor is Mg(2+).

It carries out the reaction 2-[(2R,5Z)-2-carboxy-4-methylthiazol-5(2H)-ylidene]ethyl phosphate + 4-amino-2-methyl-5-(diphosphooxymethyl)pyrimidine + 2 H(+) = thiamine phosphate + CO2 + diphosphate. The enzyme catalyses 2-(2-carboxy-4-methylthiazol-5-yl)ethyl phosphate + 4-amino-2-methyl-5-(diphosphooxymethyl)pyrimidine + 2 H(+) = thiamine phosphate + CO2 + diphosphate. It catalyses the reaction 4-methyl-5-(2-phosphooxyethyl)-thiazole + 4-amino-2-methyl-5-(diphosphooxymethyl)pyrimidine + H(+) = thiamine phosphate + diphosphate. Its pathway is cofactor biosynthesis; thiamine diphosphate biosynthesis; thiamine phosphate from 4-amino-2-methyl-5-diphosphomethylpyrimidine and 4-methyl-5-(2-phosphoethyl)-thiazole: step 1/1. Condenses 4-methyl-5-(beta-hydroxyethyl)thiazole monophosphate (THZ-P) and 2-methyl-4-amino-5-hydroxymethyl pyrimidine pyrophosphate (HMP-PP) to form thiamine monophosphate (TMP). This is Thiamine-phosphate synthase from Clostridium botulinum (strain Langeland / NCTC 10281 / Type F).